Here is a 200-residue protein sequence, read N- to C-terminus: Somatotropin (200 aa).

The N-terminal stretch at 1–22 (MARVLVLLSVVVASLLFSQGAT) is a signal peptide. His-38 contributes to the Zn(2+) binding site. Cys-71 and Cys-173 are joined by a disulfide. Glu-182 is a Zn(2+) binding site. A disulfide bridge connects residues Cys-190 and Cys-198.

The protein belongs to the somatotropin/prolactin family.

It is found in the secreted. Growth hormone plays an important role in growth control and is involved in the regulation of several anabolic processes. Implicated as an osmoregulatory substance important for seawater adaptation. This is Somatotropin (gh) from Ictalurus punctatus (Channel catfish).